Here is a 304-residue protein sequence, read N- to C-terminus: Acetyl-coenzyme A carboxylase carboxyl transferase subunit beta (304 aa).

The CoA carboxyltransferase N-terminal domain maps to 23-292; it reads VWTKCDSCGQ…PNPEAPREGV (270 aa). Zn(2+)-binding residues include cysteine 27, cysteine 30, cysteine 46, and cysteine 49. Residues 27 to 49 form a C4-type zinc finger; the sequence is CDSCGQVLYRAELERNLEVCPKC. The tract at residues 284–304 is disordered; it reads NPEAPREGVVVPPVPDQEPEA. Residues 295–304 are compositionally biased toward pro residues; sequence PPVPDQEPEA.

Belongs to the AccD/PCCB family. In terms of assembly, acetyl-CoA carboxylase is a heterohexamer composed of biotin carboxyl carrier protein (AccB), biotin carboxylase (AccC) and two subunits each of ACCase subunit alpha (AccA) and ACCase subunit beta (AccD). Zn(2+) serves as cofactor.

The protein localises to the cytoplasm. It catalyses the reaction N(6)-carboxybiotinyl-L-lysyl-[protein] + acetyl-CoA = N(6)-biotinyl-L-lysyl-[protein] + malonyl-CoA. The protein operates within lipid metabolism; malonyl-CoA biosynthesis; malonyl-CoA from acetyl-CoA: step 1/1. In terms of biological role, component of the acetyl coenzyme A carboxylase (ACC) complex. Biotin carboxylase (BC) catalyzes the carboxylation of biotin on its carrier protein (BCCP) and then the CO(2) group is transferred by the transcarboxylase to acetyl-CoA to form malonyl-CoA. The protein is Acetyl-coenzyme A carboxylase carboxyl transferase subunit beta of Shigella flexneri.